The primary structure comprises 428 residues: Histidinol dehydrogenase (428 aa).

Residues Tyr-127, Gln-185, and Asn-208 each coordinate NAD(+). Substrate is bound by residues Ser-232, Gln-254, and His-257. Zn(2+) is bound by residues Gln-254 and His-257. Catalysis depends on proton acceptor residues Glu-321 and His-322. Residues His-322, Asp-355, Glu-409, and His-414 each contribute to the substrate site. Asp-355 is a binding site for Zn(2+). His-414 lines the Zn(2+) pocket.

Belongs to the histidinol dehydrogenase family. Zn(2+) serves as cofactor.

It catalyses the reaction L-histidinol + 2 NAD(+) + H2O = L-histidine + 2 NADH + 3 H(+). Its pathway is amino-acid biosynthesis; L-histidine biosynthesis; L-histidine from 5-phospho-alpha-D-ribose 1-diphosphate: step 9/9. In terms of biological role, catalyzes the sequential NAD-dependent oxidations of L-histidinol to L-histidinaldehyde and then to L-histidine. This Pasteurella multocida (strain Pm70) protein is Histidinol dehydrogenase.